The sequence spans 407 residues: MNANSPPIAPAQPMHFEDLILEQGDLISKKLHLLSMQQFPPNAKKLLRQFSLSEVAQFLGVSQSTLKKLHLEGKGPLPQTSSSGRRSYSAEQMAELRQYLDQHGRSEARNYVPHRRSGEKLQVIAVVNFKGGSGKTTTAAHLAQYMALTGHRVLAVDLDPQASLSSLHGFQPELDMSPSLYEALRYDDQRRSISEIIQPTNFPGLDIVPANLELQEYEYDTPLAMSNKSSNDGKTFFTRISRALSEVNDRYDVVVIDCPPQLGYLTITALTAATSVLITIHPQMLDVMSMGQFLLMLGGILKPIRDVGAAVNLEWYRYLITRYEPTDGPQAQMVGFMQTLFHQFVLKNQMLKSTAVSDAGITKQTLYEVDKSQMTRSTYERAMDSLNAVNAEIVELVHASWGRKVVS.

This sequence belongs to the ParA family.

This Sinorhizobium fredii (strain NBRC 101917 / NGR234) protein is Putative replication protein A.